Consider the following 94-residue polypeptide: Protein SpdA (94 aa).

Residues 41 to 68 (GPILLALVAAGGSVGVVMTLCLLLQTAA) form a helical membrane-spanning segment.

The protein localises to the cell membrane. Functionally, involved in plasmid transfer. This chain is Protein SpdA (spdA), found in Streptomyces lividans.